The chain runs to 114 residues: uncharacterized protein (114 aa).

Positions 1–114 (MSTAASSRMR…HASQSPDTAY (114 aa)) are disordered. A compositionally biased stretch (low complexity) spans 32–43 (CRRVPSRPCRPV).

This is an uncharacterized protein from Human adenovirus B serotype 7 (HAdV-7).